A 790-amino-acid chain; its full sequence is Eukaryotic translation initiation factor 3 subunit C (790 aa).

The disordered stretch occupies residues 1-62 (MSRFFVSGYN…DGRPSGPAYF (62 aa)). Residues 14-53 (SSEEEDLLSSEEELLTSSGEENEDSDFFNDDDESSSDEED) are compositionally biased toward acidic residues. Residues 556-728 (FHQHINLELL…IVFTTDSQRS (173 aa)) form the PCI domain. A disordered region spans residues 748–790 (NEKTSSNGYAKKNQSQTQPQAQSKEVEENKFRYANVNTNTDEF). Residues 751–770 (TSSNGYAKKNQSQTQPQAQS) show a composition bias toward polar residues.

This sequence belongs to the eIF-3 subunit C family. As to quaternary structure, component of the eukaryotic translation initiation factor 3 (eIF-3) complex.

The protein localises to the cytoplasm. Functionally, component of the eukaryotic translation initiation factor 3 (eIF-3) complex, which is involved in protein synthesis of a specialized repertoire of mRNAs and, together with other initiation factors, stimulates binding of mRNA and methionyl-tRNAi to the 40S ribosome. The eIF-3 complex specifically targets and initiates translation of a subset of mRNAs involved in cell proliferation. This is Eukaryotic translation initiation factor 3 subunit C from Lodderomyces elongisporus (strain ATCC 11503 / CBS 2605 / JCM 1781 / NBRC 1676 / NRRL YB-4239) (Yeast).